Consider the following 64-residue polypeptide: Large ribosomal subunit protein bL35 (64 aa).

Basic residues-rich tracts occupy residues 1 to 15 and 23 to 42; these read MPKA…KRFR and VRQK…KRTR. A disordered region spans residues 1–45; the sequence is MPKAKTHSGASKRFRTTGSGKVVRQKANRRHLLEHKPTKRTRRLD.

This sequence belongs to the bacterial ribosomal protein bL35 family.

This is Large ribosomal subunit protein bL35 from Mycolicibacterium vanbaalenii (strain DSM 7251 / JCM 13017 / BCRC 16820 / KCTC 9966 / NRRL B-24157 / PYR-1) (Mycobacterium vanbaalenii).